The sequence spans 541 residues: T-complex protein 1 subunit epsilon (541 aa).

At Ala2 the chain carries N-acetylalanine. Lys20 participates in a covalent cross-link: Glycyl lysine isopeptide (Lys-Gly) (interchain with G-Cter in SUMO2). Ser26 is subject to Phosphoserine. Residue Gly53 coordinates ADP. ATP is bound at residue Gly53. Asp104 serves as a coordination point for Mg(2+). Residues Gly105, Thr106, Thr107, and Ser175 each contribute to the ADP site. ATP contacts are provided by Thr106 and Thr107. Residues Lys210, Lys214, Lys265, Lys275, and Lys279 each participate in a glycyl lysine isopeptide (Lys-Gly) (interchain with G-Cter in SUMO2) cross-link. Position 346 is a phosphoserine (Ser346). A Glycyl lysine isopeptide (Lys-Gly) (interchain with G-Cter in SUMO2) cross-link involves residue Lys392. 4 residues coordinate ADP: Gly422, Asp492, Glu508, and Lys513. Gly422 is an ATP binding site. Ser539 carries the post-translational modification Phosphoserine.

This sequence belongs to the TCP-1 chaperonin family. Component of the chaperonin-containing T-complex (TRiC), a hexadecamer composed of two identical back-to-back stacked rings enclosing a protein folding chamber. Each ring is made up of eight different subunits: TCP1/CCT1, CCT2, CCT3, CCT4, CCT5, CCT6A/CCT6, CCT7, CCT8. Interacts with PACRG. Interacts with DNAAF4. Interacts with DLEC1. Interacts with SPMAP2. Ubiquitinated by the DCX(DCAF12) complex specifically recognizes the diglutamate (Glu-Glu) at the C-terminus, leading to its degradation.

It is found in the cytoplasm. The protein resides in the cytoskeleton. Its subcellular location is the microtubule organizing center. The protein localises to the centrosome. The enzyme catalyses ATP + H2O = ADP + phosphate + H(+). Its function is as follows. Component of the chaperonin-containing T-complex (TRiC), a molecular chaperone complex that assists the folding of actin, tubulin and other proteins upon ATP hydrolysis. The TRiC complex mediates the folding of WRAP53/TCAB1, thereby regulating telomere maintenance. As part of the TRiC complex may play a role in the assembly of BBSome, a complex involved in ciliogenesis regulating transports vesicles to the cilia. This is T-complex protein 1 subunit epsilon (CCT5) from Pongo abelii (Sumatran orangutan).